Here is an 86-residue protein sequence, read N- to C-terminus: Small ribosomal subunit protein uS17 (86 aa).

This sequence belongs to the universal ribosomal protein uS17 family. As to quaternary structure, part of the 30S ribosomal subunit.

In terms of biological role, one of the primary rRNA binding proteins, it binds specifically to the 5'-end of 16S ribosomal RNA. In Nitrosococcus oceani (strain ATCC 19707 / BCRC 17464 / JCM 30415 / NCIMB 11848 / C-107), this protein is Small ribosomal subunit protein uS17.